Consider the following 211-residue polypeptide: Uracil phosphoribosyltransferase (211 aa).

Residues Arg78, Arg103, and 130 to 138 (DPMLATGGT) contribute to the 5-phospho-alpha-D-ribose 1-diphosphate site. Uracil is bound by residues Ile195 and 200-202 (GDA). Position 201 (Asp201) interacts with 5-phospho-alpha-D-ribose 1-diphosphate.

This sequence belongs to the UPRTase family. It depends on Mg(2+) as a cofactor.

The catalysed reaction is UMP + diphosphate = 5-phospho-alpha-D-ribose 1-diphosphate + uracil. It functions in the pathway pyrimidine metabolism; UMP biosynthesis via salvage pathway; UMP from uracil: step 1/1. Allosterically activated by GTP. In terms of biological role, catalyzes the conversion of uracil and 5-phospho-alpha-D-ribose 1-diphosphate (PRPP) to UMP and diphosphate. This chain is Uracil phosphoribosyltransferase, found in Streptomyces griseus subsp. griseus (strain JCM 4626 / CBS 651.72 / NBRC 13350 / KCC S-0626 / ISP 5235).